A 241-amino-acid polypeptide reads, in one-letter code: Small ribosomal subunit protein uS10m (241 aa).

A mitochondrion-targeting transit peptide spans 1–54; the sequence is MIAGVLRRSSLPSRQTLSAALASFNSCISHNLTPATTGASVSSRFTLASSPNSF.

It belongs to the universal ribosomal protein uS10 family. As to quaternary structure, component of the mitochondrial ribosome small subunit.

It is found in the mitochondrion. In Arabidopsis thaliana (Mouse-ear cress), this protein is Small ribosomal subunit protein uS10m (RPS10).